A 54-amino-acid chain; its full sequence is Low temperature-induced protein lt101.2 (54 aa).

The next 2 membrane-spanning stretches (helical) occupy residues A2 to L22 and L34 to A54.

It belongs to the UPF0057 (PMP3) family.

The protein resides in the membrane. This Hordeum vulgare (Barley) protein is Low temperature-induced protein lt101.2 (LT101.2).